The primary structure comprises 501 residues: Putative BTB/POZ domain-containing protein L107 (501 aa).

One can recognise a BTB domain in the interval 16–87; it reads TDLELTLVDS…FYITDIERSQ (72 aa).

Belongs to the mimivirus BTB/WD family.

The protein is Putative BTB/POZ domain-containing protein L107 of Acanthamoeba polyphaga mimivirus (APMV).